We begin with the raw amino-acid sequence, 1228 residues long: DNA-directed RNA polymerase subunit beta (1228 aa).

Belongs to the RNA polymerase beta chain family. In terms of assembly, the RNAP catalytic core consists of 2 alpha, 1 beta, 1 beta' and 1 omega subunit. When a sigma factor is associated with the core the holoenzyme is formed, which can initiate transcription.

The catalysed reaction is RNA(n) + a ribonucleoside 5'-triphosphate = RNA(n+1) + diphosphate. In terms of biological role, DNA-dependent RNA polymerase catalyzes the transcription of DNA into RNA using the four ribonucleoside triphosphates as substrates. This Leptospira biflexa serovar Patoc (strain Patoc 1 / Ames) protein is DNA-directed RNA polymerase subunit beta.